The chain runs to 199 residues: Large ribosomal subunit protein eL13A (199 aa).

Threonine 144 and threonine 152 each carry phosphothreonine.

Belongs to the eukaryotic ribosomal protein eL13 family. As to quaternary structure, component of the large ribosomal subunit (LSU). Mature yeast ribosomes consist of a small (40S) and a large (60S) subunit. The 40S small subunit contains 1 molecule of ribosomal RNA (18S rRNA) and 33 different proteins (encoded by 57 genes). The large 60S subunit contains 3 rRNA molecules (25S, 5.8S and 5S rRNA) and 46 different proteins (encoded by 81 genes).

It localises to the cytoplasm. Component of the ribosome, a large ribonucleoprotein complex responsible for the synthesis of proteins in the cell. The small ribosomal subunit (SSU) binds messenger RNAs (mRNAs) and translates the encoded message by selecting cognate aminoacyl-transfer RNA (tRNA) molecules. The large subunit (LSU) contains the ribosomal catalytic site termed the peptidyl transferase center (PTC), which catalyzes the formation of peptide bonds, thereby polymerizing the amino acids delivered by tRNAs into a polypeptide chain. The nascent polypeptides leave the ribosome through a tunnel in the LSU and interact with protein factors that function in enzymatic processing, targeting, and the membrane insertion of nascent chains at the exit of the ribosomal tunnel. In Saccharomyces cerevisiae (strain ATCC 204508 / S288c) (Baker's yeast), this protein is Large ribosomal subunit protein eL13A.